The chain runs to 353 residues: Methionine import ATP-binding protein MetN (353 aa).

Positions 11 to 251 (ITFDRVEKSF…PEHPTTRSFL (241 aa)) constitute an ABC transporter domain. 48-55 (GRSGAGKS) contributes to the ATP binding site.

The protein belongs to the ABC transporter superfamily. Methionine importer (TC 3.A.1.24) family. As to quaternary structure, the complex is composed of two ATP-binding proteins (MetN), two transmembrane proteins (MetI) and a solute-binding protein (MetQ).

It localises to the cell inner membrane. The catalysed reaction is L-methionine(out) + ATP + H2O = L-methionine(in) + ADP + phosphate + H(+). It catalyses the reaction D-methionine(out) + ATP + H2O = D-methionine(in) + ADP + phosphate + H(+). In terms of biological role, part of the ABC transporter complex MetNIQ involved in methionine import. Responsible for energy coupling to the transport system. The chain is Methionine import ATP-binding protein MetN from Cereibacter sphaeroides (strain ATCC 17023 / DSM 158 / JCM 6121 / CCUG 31486 / LMG 2827 / NBRC 12203 / NCIMB 8253 / ATH 2.4.1.) (Rhodobacter sphaeroides).